A 244-amino-acid chain; its full sequence is Cell division protein ZapD (244 aa).

The protein belongs to the ZapD family. Interacts with FtsZ.

The protein resides in the cytoplasm. Functionally, cell division factor that enhances FtsZ-ring assembly. Directly interacts with FtsZ and promotes bundling of FtsZ protofilaments, with a reduction in FtsZ GTPase activity. The protein is Cell division protein ZapD of Shewanella sp. (strain MR-7).